A 497-amino-acid chain; its full sequence is SPI-2 type 3 secretion system secretin (497 aa).

The N-terminal stretch at 1 to 20 (MVVNKRLILILLFILNTAKS) is a signal peptide.

Belongs to the bacterial secretin family. T3SS SctC subfamily. As to quaternary structure, the core secretion machinery of the T3SS is composed of approximately 20 different proteins, including cytoplasmic components, a base, an export apparatus and a needle. This subunit is part of the base, which anchors the injectisome in the bacterial cell envelope. Forms a stable homooligomeric complex.

It localises to the cell outer membrane. Functionally, component of the type III secretion system (T3SS), also called injectisome, which is used to inject bacterial effector proteins into eukaryotic host cells. Forms a ring-shaped multimeric structure with an apparent central pore in the outer membrane. Required for secretion of some type III-secreted effectors including the SpvB exotoxin. The polypeptide is SPI-2 type 3 secretion system secretin (Salmonella typhimurium (strain 14028s / SGSC 2262)).